Consider the following 116-residue polypeptide: Nucleoid-associated protein PMT9312_0020 (116 aa).

The protein belongs to the YbaB/EbfC family. In terms of assembly, homodimer.

The protein resides in the cytoplasm. It localises to the nucleoid. Binds to DNA and alters its conformation. May be involved in regulation of gene expression, nucleoid organization and DNA protection. This chain is Nucleoid-associated protein PMT9312_0020, found in Prochlorococcus marinus (strain MIT 9312).